We begin with the raw amino-acid sequence, 544 residues long: POTE ankyrin domain family member B2 (544 aa).

ANK repeat units follow at residues 135–167 (QKRT…VLDN), 168–200 (KKRT…IQDE), 201–233 (YGNT…SKNK), 234–266 (CGLT…ALDR), and 267–299 (YGRT…SQDL). The interval 332–457 (SSENSNPEQD…NTGISQDEIL (126 aa)) is disordered. Composition is skewed to basic and acidic residues over residues 340–355 (QDLK…RLKV) and 364–375 (MSQEPEINKDCD). Polar residues predominate over residues 439-457 (TQKQLSEEQNTGISQDEIL).

It belongs to the POTE family.

This chain is POTE ankyrin domain family member B2 (POTEB2), found in Homo sapiens (Human).